Reading from the N-terminus, the 128-residue chain is NADPH-dependent 7-cyano-7-deazaguanine reductase (128 aa).

Residue Cys-34 is the Thioimide intermediate of the active site. Asp-41 (proton donor) is an active-site residue. Residues 56-58 (VEL) and 75-76 (HE) contribute to the substrate site.

This sequence belongs to the GTP cyclohydrolase I family. QueF type 1 subfamily.

Its subcellular location is the cytoplasm. The enzyme catalyses 7-aminomethyl-7-carbaguanine + 2 NADP(+) = 7-cyano-7-deazaguanine + 2 NADPH + 3 H(+). It participates in tRNA modification; tRNA-queuosine biosynthesis. In terms of biological role, catalyzes the NADPH-dependent reduction of 7-cyano-7-deazaguanine (preQ0) to 7-aminomethyl-7-deazaguanine (preQ1). This chain is NADPH-dependent 7-cyano-7-deazaguanine reductase, found in Thermomicrobium roseum (strain ATCC 27502 / DSM 5159 / P-2).